The sequence spans 86 residues: Large ribosomal subunit protein bL27 (86 aa).

The interval 1–26 (MATKKAGGSSRNGRDSAGRRLGVKQS) is disordered.

It belongs to the bacterial ribosomal protein bL27 family.

This is Large ribosomal subunit protein bL27 from Rickettsia canadensis (strain McKiel).